Consider the following 93-residue polypeptide: Protein LSO1 (93 aa).

Residues 1–73 (MHNTGKRYSE…TEKLRAKKER (73 aa)) form a disordered region. A coiled-coil region spans residues 20 to 83 (ARKRRQAYEK…DQLLAAEEEA (64 aa)). 2 stretches are compositionally biased toward basic and acidic residues: residues 25 to 49 (QAYE…EEGA) and 57 to 73 (LIME…KKER).

Its subcellular location is the nucleus. The protein localises to the cytoplasm. Likely to play a role in iron homeostasis. This Saccharomyces cerevisiae (strain ATCC 204508 / S288c) (Baker's yeast) protein is Protein LSO1.